The primary structure comprises 787 residues: Disease resistance protein ADR1 (787 aa).

One can recognise an RPW8 domain in the interval 1–149 (MASFIDLFAG…LLTERNDSLS (149 aa)). The stretch at 96 to 112 (HANKMKDLEKQISRFLN) forms a coiled coil. 193 to 200 (GMSGSGKT) is an ATP binding site. Residues 247–414 (HQRKLVILDD…PLDLLTSVWV (168 aa)) enclose the NB-ARC domain. LRR repeat units follow at residues 549–575 (MSRLRVLVIINNGMSPARLHGFSIFAN), 576–599 (LAKLRSLWLKRVHVPELTSCTIPL), 650–674 (ITSLNSLSITNCPRILELPKNLSNV), and 722–745 (LGSLEKIDMRECSLLGLPSSVAAL).

The protein belongs to the disease resistance NB-LRR family.

Disease resistance (R) protein that mediates resistance against Hyaloperonospora parasitica in a salicylic acid-dependent manner. Also mediates resistance against Erysiphe cichoracearum is both salicylic acid-dependent and partially NPR1-dependent. Resistance proteins guard the plant against pathogens that contain an appropriate avirulence protein via an indirect interaction with this avirulence protein. That triggers a defense system including the hypersensitive response, which restricts the pathogen growth. This Arabidopsis thaliana (Mouse-ear cress) protein is Disease resistance protein ADR1 (ADR1).